The sequence spans 748 residues: Phytochrome-like protein Cph1 (748 aa).

Residues 19-86 form the PAS domain; that stretch reads AIHTAHLIQP…IQSRLTAGQI (68 aa). Positions 87–510 are chromophore binding domain; the sequence is SSLNPSKLWA…KKAIVNLILR (424 aa). The GAF domain maps to 152 to 320; sequence NLRDFYDVIV…VVFSNISAQE (169 aa). Cysteine 259 lines the a tetrapyrrole pocket. Residues 535-748 enclose the Histidine kinase domain; the sequence is IASHDLQEPL…TFYFSIPIGN (214 aa). A Phosphohistidine; by autocatalysis modification is found at histidine 538.

It in the N-terminal section; belongs to the phytochrome family. In terms of assembly, homodimer. In terms of processing, contains one covalently linked tetrapyrrole chromophore.

The enzyme catalyses ATP + protein L-histidine = ADP + protein N-phospho-L-histidine.. In terms of biological role, regulatory photoreceptor which exists in two forms that are reversibly interconvertible by light: the R form that absorbs maximally in the red region of the spectrum and the FR form that absorbs maximally in the far-red region. Also has a slight blue shift for the far-red maximum. Forms a two-component system with the Rrcp1 response regulator. This chain is Phytochrome-like protein Cph1 (cph1), found in Synechocystis sp. (strain ATCC 27184 / PCC 6803 / Kazusa).